The sequence spans 85 residues: MFQRDIKITTPNGLHTRPAALLVKEAKKFISEINIISNGKSANAKSLFKLQTLGLVQNSLITISAHGIDEKVAVEDLAKFLTTLK.

In terms of domain architecture, HPr spans 1-85 (MFQRDIKITT…DLAKFLTTLK (85 aa)). Residue histidine 15 is the Pros-phosphohistidine intermediate of the active site.

It belongs to the HPr family.

It is found in the cytoplasm. Its function is as follows. General (non sugar-specific) component of the phosphoenolpyruvate-dependent sugar phosphotransferase system (sugar PTS). This major carbohydrate active-transport system catalyzes the phosphorylation of incoming sugar substrates concomitantly with their translocation across the cell membrane. The phosphoryl group from phosphoenolpyruvate (PEP) is transferred to the phosphoryl carrier protein HPr by enzyme I. Phospho-HPr then transfers it to the PTS EIIA domain. In Buchnera aphidicola subsp. Baizongia pistaciae (strain Bp), this protein is Phosphocarrier protein HPr (ptsH).